The following is a 626-amino-acid chain: tRNA uridine 5-carboxymethylaminomethyl modification enzyme MnmG (626 aa).

Residue G13–G18 coordinates FAD. G273–F287 provides a ligand contact to NAD(+).

It belongs to the MnmG family. Homodimer. Heterotetramer of two MnmE and two MnmG subunits. Requires FAD as cofactor.

The protein localises to the cytoplasm. NAD-binding protein involved in the addition of a carboxymethylaminomethyl (cmnm) group at the wobble position (U34) of certain tRNAs, forming tRNA-cmnm(5)s(2)U34. This is tRNA uridine 5-carboxymethylaminomethyl modification enzyme MnmG from Acinetobacter baumannii (strain AB307-0294).